A 223-amino-acid polypeptide reads, in one-letter code: Neurotrophic factor BDNF precursor form (223 aa).

Positions 1 to 5 are cleaved as a signal peptide; that stretch reads SCMKA. Residues 6–114 constitute a propeptide that is removed on maturation; the sequence is APMKEISIRG…AANMSMRVRR (109 aa). N-linked (GlcNAc...) asparagine glycosylation occurs at Asn107. 2 disulfides stabilise this stretch: Cys127-Cys194 and Cys172-Cys223.

It belongs to the NGF-beta family.

It is found in the secreted. In terms of biological role, promotes the survival of neuronal populations that are all located either in the central nervous system or directly connected to it. In Acrochordus javanicus (Javan wart snake), this protein is Neurotrophic factor BDNF precursor form (BDNF).